A 329-amino-acid chain; its full sequence is MTVTIYDVAREARVSMATVSRVVNGNQNVKPETRDKVNEVIKKLNYRPNAVARGLASKRTTTVGVIIPDISNVYYSQLARGLEDIATMYKYHSIISNSDNDPSKEKEIFNNLLSKQVDGIIFLGGTISEEIKDLINKSSVPVVVSGTNGKDEGISSVNIDFESAAKEITEHLIEKGAKSFAFVGGDYSKKAQEDVLVGLKDVLVQHELELDEQLIFNGNETYKDGLRAFESLATAKPDAILSISDEQAIGLVHAAQDAGVNVPNDLQIVSFNNTRLVEMVRPQLSSVIQPLYDIGAVGMRLLTKYMNEEDIDEPNVILPHRIEYRGTTK.

One can recognise an HTH lacI-type domain in the interval 1-57 (MTVTIYDVAREARVSMATVSRVVNGNQNVKPETRDKVNEVIKKLNYRPNAVARGLAS). The H-T-H motif DNA-binding region spans 5 to 24 (IYDVAREARVSMATVSRVVN).

Its function is as follows. Global transcriptional regulator of carbon catabolite repression (CCR) and carbon catabolite activation (CCA), which ensures optimal energy usage under diverse conditions. The protein is Catabolite control protein A (ccpA) of Staphylococcus xylosus.